The sequence spans 362 residues: Trans-enoyl reductase phm4 (362 aa).

50–53 provides a ligand contact to NADP(+); sequence VDAK. 136–143 serves as a coordination point for substrate; that stretch reads TCFMTCGL. Residues 171 to 174, 194 to 197, Tyr-212, and 259 to 260 each bind NADP(+); these read ATAT, SPHS, and LD. Residue 280–284 participates in substrate binding; the sequence is GPIML. 349 to 350 is a binding site for NADP(+); sequence VN.

Belongs to the zinc-containing alcohol dehydrogenase family. Monomer.

It functions in the pathway secondary metabolite biosynthesis. In terms of biological role, trans-enoyl reductase; part of the gene cluster that mediates the biosynthesis of the trans-fused decalin-containing tetramic acid phomasetin, the stereochemical opposite of the HIV-1 integrase inhibitor equisetin. The PKS module of phm1 together with the enoylreductase phm4 catalyze the formation of the polyketide unit which is then conjugated to L-serine by the condensation domain of the phm1 NRPS module. Activity of the Dieckmann cyclase domain (RED) of phm1 results in release of the Dieckmann product intermediate. The Diels-Alderase phm7 then uses the Dieckmann product of phm1 as substrate and catalyzes the Diels-Alder cycloaddition to form the decalin ring of N-desmethylphomasetin. N-desmethylphomasetin is further methylated to phomasetin by the methyltransferase phm5. This Pyrenochaetopsis sp protein is Trans-enoyl reductase phm4.